A 226-amino-acid chain; its full sequence is Ribonuclease 3 (226 aa).

The 123-residue stretch at 7–129 (LPRLCRTLGY…IIGAIYLDSD (123 aa)) folds into the RNase III domain. Residue E42 coordinates Mg(2+). Residue D46 is part of the active site. Residues D115 and E118 each contribute to the Mg(2+) site. Residue E118 is part of the active site. Residues 156 to 226 (DAKTLLQEYL…AAQVLELLKK (71 aa)) form the DRBM domain.

It belongs to the ribonuclease III family. In terms of assembly, homodimer. The cofactor is Mg(2+).

The protein localises to the cytoplasm. It carries out the reaction Endonucleolytic cleavage to 5'-phosphomonoester.. Digests double-stranded RNA. Involved in the processing of primary rRNA transcript to yield the immediate precursors to the large and small rRNAs (23S and 16S). Processes some mRNAs, and tRNAs when they are encoded in the rRNA operon. Processes pre-crRNA and tracrRNA of type II CRISPR loci if present in the organism. The polypeptide is Ribonuclease 3 (Shewanella oneidensis (strain ATCC 700550 / JCM 31522 / CIP 106686 / LMG 19005 / NCIMB 14063 / MR-1)).